The following is a 122-amino-acid chain: Acidic phospholipase A2 homolog vipoxin A chain (122 aa).

Intrachain disulfides connect C26-C115, C28-C44, C43-C95, C49-C122, C50-C88, C57-C81, and C75-C86.

Belongs to the phospholipase A2 family. Group II subfamily. D49 sub-subfamily. As to quaternary structure, heterodimer of A and B (AC P14420) chains; non-covalently linked. The A chain (acidic) is non-toxic, and increases the toxicity of the B chain (basic). The A chain may act as factor stabilizing the complex structure and hence retaining its toxicity by preventing non-specific binding. Upon binding to the target membranes the A chain may dissociate. Expressed by the venom gland.

The protein resides in the secreted. In terms of biological role, heterodimer: postsynaptic neurotoxin. Functionally, monomer: Acidic phospholipase A2 homolog that is non-toxic. This is Acidic phospholipase A2 homolog vipoxin A chain from Vipera ammodytes meridionalis (Eastern sand viper).